The chain runs to 370 residues: uncharacterized protein (370 aa).

A divalent metal cation-binding residues include Asp152, His154, Asp184, Asn215, His306, and His308.

The protein belongs to the metallophosphoesterase superfamily. The cofactor is a divalent metal cation.

This is an uncharacterized protein from Helicobacter pylori (strain J99 / ATCC 700824) (Campylobacter pylori J99).